We begin with the raw amino-acid sequence, 201 residues long: Pyridoxal 5'-phosphate synthase subunit PdxT (201 aa).

Position 50 to 52 (50 to 52 (GES)) interacts with L-glutamine. The Nucleophile role is filled by cysteine 82. L-glutamine is bound by residues arginine 115 and 143–144 (IR). Residues histidine 179 and glutamate 181 each act as charge relay system in the active site.

Belongs to the glutaminase PdxT/SNO family. In terms of assembly, in the presence of PdxS, forms a dodecamer of heterodimers. Only shows activity in the heterodimer.

It carries out the reaction aldehydo-D-ribose 5-phosphate + D-glyceraldehyde 3-phosphate + L-glutamine = pyridoxal 5'-phosphate + L-glutamate + phosphate + 3 H2O + H(+). The enzyme catalyses L-glutamine + H2O = L-glutamate + NH4(+). The protein operates within cofactor biosynthesis; pyridoxal 5'-phosphate biosynthesis. Catalyzes the hydrolysis of glutamine to glutamate and ammonia as part of the biosynthesis of pyridoxal 5'-phosphate. The resulting ammonia molecule is channeled to the active site of PdxS. This is Pyridoxal 5'-phosphate synthase subunit PdxT from Deinococcus geothermalis (strain DSM 11300 / CIP 105573 / AG-3a).